The sequence spans 150 residues: MKCPFCNFEESKVVDSRATDDNTTIRRRRECLNCNKRYTTYEKIEDFPVLVVKKDLTRENFNKEKIINGLIIACQKRPVSRKQIEDIAYEIEKSISNRMVTEIASKDIGEMIMDKLKQVDEISYVRFASVYRQFKDINTFLEEIKNLVVN.

The segment at 3 to 34 (CPFCNFEESKVVDSRATDDNTTIRRRRECLNC) is a zinc-finger region. The ATP-cone domain occupies 49–139 (VLVVKKDLTR…VYRQFKDINT (91 aa)).

Belongs to the NrdR family. Zn(2+) serves as cofactor.

In terms of biological role, negatively regulates transcription of bacterial ribonucleotide reductase nrd genes and operons by binding to NrdR-boxes. The sequence is that of Transcriptional repressor NrdR from Clostridium botulinum (strain Alaska E43 / Type E3).